The sequence spans 307 residues: UDP-N-acetylenolpyruvoylglucosamine reductase (307 aa).

The FAD-binding PCMH-type domain occupies T34–G198. R177 is a catalytic residue. S227 (proton donor) is an active-site residue. The active site involves E297.

This sequence belongs to the MurB family. It depends on FAD as a cofactor.

The protein localises to the cytoplasm. The catalysed reaction is UDP-N-acetyl-alpha-D-muramate + NADP(+) = UDP-N-acetyl-3-O-(1-carboxyvinyl)-alpha-D-glucosamine + NADPH + H(+). It functions in the pathway cell wall biogenesis; peptidoglycan biosynthesis. Its function is as follows. Cell wall formation. In Staphylococcus haemolyticus (strain JCSC1435), this protein is UDP-N-acetylenolpyruvoylglucosamine reductase.